The primary structure comprises 64 residues: Prokaryotic ubiquitin-like protein Pup (64 aa).

The segment at 1–37 (MAQEQTQRAGGGEDDETTGGDGSAGQERREKLAAETD) is disordered. Residues 21–58 (DGSAGQERREKLAAETDDLLDEIDDVLEENAEDFVRAY) are ARC ATPase binding. A coiled-coil region spans residues 24–52 (AGQERREKLAAETDDLLDEIDDVLEENAE). Gln-64 carries the deamidated glutamine modification. Residue Gln-64 forms an Isoglutamyl lysine isopeptide (Gln-Lys) (interchain with K-? in acceptor proteins) linkage.

Belongs to the prokaryotic ubiquitin-like protein family. Strongly interacts with the proteasome-associated ATPase ARC through a hydrophobic interface; the interacting region of Pup lies in its C-terminal half. There is one Pup binding site per ARC hexamer ring. In terms of processing, is modified by deamidation of its C-terminal glutamine to glutamate by the deamidase Dop, a prerequisite to the subsequent pupylation process.

It functions in the pathway protein degradation; proteasomal Pup-dependent pathway. Its function is as follows. Protein modifier that is covalently attached to lysine residues of substrate proteins, thereby targeting them for proteasomal degradation. The tagging system is termed pupylation. The chain is Prokaryotic ubiquitin-like protein Pup from Rhodococcus erythropolis (strain PR4 / NBRC 100887).